Consider the following 289-residue polypeptide: MRKLSSLVCGAGAGLAAFYLSRLRDPQKAAHSSWTNSEKPVDACGLWDSNWDCRDPRLMVRPLKNTQPEEENRFNADLEKAKPKKARHIILVRHGEYLDVGESDATHHLTERGRKQAQFTGQRLSELGIQWDKVIASTMVRAQETADIILKEIKYDKEKVVNCVYLREGAPIPPQPPVGHWKPEASQFYRDGARIEAAFRRYFHRAYPDQDKESYTLIVGHGNVIRYFVCRALQFPPEGWLRISINHASITWLTISPSGNVSIKYLGDSGFMPVQYLTNRIPRDAKNVV.

Residues Leu7 to Leu23 traverse the membrane as a helical segment.

The protein belongs to the phosphoglycerate mutase family. BPG-dependent PGAM subfamily. As to quaternary structure, interacts with Pk92B/ASK1.

Its subcellular location is the mitochondrion outer membrane. The enzyme catalyses O-phospho-L-seryl-[protein] + H2O = L-seryl-[protein] + phosphate. The catalysed reaction is O-phospho-L-threonyl-[protein] + H2O = L-threonyl-[protein] + phosphate. Its function is as follows. Displays phosphatase activity for serine/threonine residues, and dephosphorylates and activates Pk92B kinase. Has apparently no phosphoglycerate mutase activity. The sequence is that of Serine/threonine-protein phosphatase Pgam5, mitochondrial from Drosophila ananassae (Fruit fly).